A 244-amino-acid polypeptide reads, in one-letter code: Octanoyltransferase (244 aa).

The BPL/LPL catalytic domain occupies 49 to 237; sequence VAPGNFLIFC…HLTALFELHI (189 aa). Residues 94–101, 167–169, and 180–182 contribute to the substrate site; these read RGGDITYH, AMG, and GFA. Cysteine 198 (acyl-thioester intermediate) is an active-site residue.

Belongs to the LipB family.

It localises to the cytoplasm. It carries out the reaction octanoyl-[ACP] + L-lysyl-[protein] = N(6)-octanoyl-L-lysyl-[protein] + holo-[ACP] + H(+). It functions in the pathway protein modification; protein lipoylation via endogenous pathway; protein N(6)-(lipoyl)lysine from octanoyl-[acyl-carrier-protein]: step 1/2. Functionally, catalyzes the transfer of endogenously produced octanoic acid from octanoyl-acyl-carrier-protein onto the lipoyl domains of lipoate-dependent enzymes. Lipoyl-ACP can also act as a substrate although octanoyl-ACP is likely to be the physiological substrate. This is Octanoyltransferase from Cytophaga hutchinsonii (strain ATCC 33406 / DSM 1761 / CIP 103989 / NBRC 15051 / NCIMB 9469 / D465).